An 86-amino-acid polypeptide reads, in one-letter code: Large ribosomal subunit protein bL31 (86 aa).

A disordered region spans residues 64 to 86; the sequence is KYGMGSANSSESKDQKEEKDSKK. Residues 74-86 are compositionally biased toward basic and acidic residues; that stretch reads ESKDQKEEKDSKK.

This sequence belongs to the bacterial ribosomal protein bL31 family. Type A subfamily. Part of the 50S ribosomal subunit.

In terms of biological role, binds the 23S rRNA. The sequence is that of Large ribosomal subunit protein bL31 from Prochlorococcus marinus (strain MIT 9301).